The following is a 190-amino-acid chain: UPF0340 protein BT9727_4999 (190 aa).

It belongs to the UPF0340 family.

This Bacillus thuringiensis subsp. konkukian (strain 97-27) protein is UPF0340 protein BT9727_4999.